Reading from the N-terminus, the 297-residue chain is Cbb3-type cytochrome c oxidase subunit CcoP (297 aa).

The Cytoplasmic segment spans residues 1–35; the sequence is MSKKPTTKKEVQTTGHQWDGIEELNTPLPRWWLWT. A helical membrane pass occupies residues 36–56; that stretch reads FYATIIWGVAYSIAMPAWPIF. At 57–297 the chain is on the periplasmic side; the sequence is SDKATPGLLG…SYVHSLGGGQ (241 aa). Cytochrome c domains are found at residues 108-199 and 206-294; these read YTRN…LQIS and VKAT…HSLG. Positions 121, 124, 125, 174, 219, 222, 223, and 264 each coordinate heme c.

Belongs to the CcoP / FixP family. Component of the cbb3-type cytochrome c oxidase at least composed of CcoN, CcoO, CcoQ and CcoP. Interacts with CcoQ. Heme c is required as a cofactor.

It is found in the cell inner membrane. Its pathway is energy metabolism; oxidative phosphorylation. In terms of biological role, C-type cytochrome. Part of the cbb3-type cytochrome c oxidase complex. CcoP subunit is required for transferring electrons from donor cytochrome c via its heme groups to CcoO subunit. From there, electrons are shuttled to the catalytic binuclear center of CcoN subunit where oxygen reduction takes place. The complex also functions as a proton pump. This chain is Cbb3-type cytochrome c oxidase subunit CcoP, found in Rhodobacter capsulatus (Rhodopseudomonas capsulata).